The sequence spans 843 residues: Protein translocase subunit SecA 1 (843 aa).

ATP contacts are provided by residues Gln-91, 109–113 (GEGKT), and Asp-498. Basic and acidic residues predominate over residues 799 to 813 (EAKHVSAEDGKEKVK). The segment at 799-826 (EAKHVSAEDGKEKVKPKPIVKGDQVGRN) is disordered. Zn(2+) contacts are provided by Cys-829, Cys-831, Cys-840, and His-841.

This sequence belongs to the SecA family. In terms of assembly, monomer and homodimer. Part of the essential Sec protein translocation apparatus which comprises SecA, SecYEG and auxiliary proteins SecDF. Other proteins may also be involved. Requires Zn(2+) as cofactor.

The protein localises to the cell membrane. It localises to the cytoplasm. The catalysed reaction is ATP + H2O + cellular proteinSide 1 = ADP + phosphate + cellular proteinSide 2.. In terms of biological role, part of the Sec protein translocase complex. Interacts with the SecYEG preprotein conducting channel. Has a central role in coupling the hydrolysis of ATP to the transfer of proteins into and across the cell membrane, serving as an ATP-driven molecular motor driving the stepwise translocation of polypeptide chains across the membrane. The chain is Protein translocase subunit SecA 1 from Staphylococcus aureus (strain MRSA252).